The chain runs to 47 residues: Small, acid-soluble spore protein K (47 aa).

The disordered stretch occupies residues 1-47 (MRNKAHGFPHRISFDGEPDRAKHASKRANGTINTKPQERMHQANPDQ). Over residues 12–22 (ISFDGEPDRAK) the composition is skewed to basic and acidic residues.

This sequence belongs to the SspK family.

Its subcellular location is the spore core. The polypeptide is Small, acid-soluble spore protein K (Halalkalibacterium halodurans (strain ATCC BAA-125 / DSM 18197 / FERM 7344 / JCM 9153 / C-125) (Bacillus halodurans)).